The following is a 342-amino-acid chain: Sideroflexin-5 (342 aa).

The span at 1-24 (MADTATTASAASAAASASNASSDA) shows a compositional bias: low complexity. Residues 1-29 (MADTATTASAASAAASASNASSDAPPFQL) are disordered. The next 4 helical transmembrane spans lie at 105–125 (IFMP…VVGL), 165–185 (FIQG…GLNV), 256–276 (LTRV…MSML), and 289–309 (LLPV…PLAI).

It belongs to the sideroflexin family. As to expression, specifically expressed in the brain.

The protein localises to the mitochondrion inner membrane. The catalysed reaction is citrate(in) = citrate(out). Mitochondrial amino-acid transporter. Transports citrate. Does not act as a serine transporter: not able to mediate transport of serine into mitochondria. In brown adipose tissue, plays a role in the regulation of UCP1-dependent thermogenesis probably by supporting mitochondrial glycerol-3-phosphate utilization. In Rattus norvegicus (Rat), this protein is Sideroflexin-5.